A 394-amino-acid chain; its full sequence is Elongation factor Tu (394 aa).

Positions 10-204 constitute a tr-type G domain; sequence KPHVNIGTIG…AVDSYIPQPV (195 aa). The tract at residues 19–26 is G1; sequence GHVDHGKT. A GTP-binding site is contributed by 19 to 26; the sequence is GHVDHGKT. Thr26 contacts Mg(2+). A G2 region spans residues 60–64; the sequence is GITIS. Residues 81–84 are G3; it reads DCPG. GTP is bound by residues 81 to 85 and 136 to 139; these read DCPGH and NKID. The G4 stretch occupies residues 136-139; the sequence is NKID. The tract at residues 174–176 is G5; that stretch reads SAL.

This sequence belongs to the TRAFAC class translation factor GTPase superfamily. Classic translation factor GTPase family. EF-Tu/EF-1A subfamily. In terms of assembly, monomer.

The protein resides in the cytoplasm. It catalyses the reaction GTP + H2O = GDP + phosphate + H(+). Its function is as follows. GTP hydrolase that promotes the GTP-dependent binding of aminoacyl-tRNA to the A-site of ribosomes during protein biosynthesis. This chain is Elongation factor Tu, found in Rickettsia peacockii (strain Rustic).